The following is a 257-amino-acid chain: MAADIDLQGDRESELMHALATVRSRLAAASQAAGRNVGEIELLPISKFFPATDVAILSRLGCRSVGESRAQEASTKAAEFAELLGVSREEKSSIHWHMVGQIQRNKVRSLAQWAHTAHSIDSLQLVAALDRAVAAALAGGRREQPLQVYVQISLDGDISRGGVNVTAPGAVDRVCAQVEESKSLELVGLMGIPPLGWNPDQAFEQLRLEHRRVLRSHPDAIGLSAGMSNDFEIAVKHGSTCVRVGTALLGPSRLRSP.

Lys47 is modified (N6-(pyridoxal phosphate)lysine).

Belongs to the pyridoxal phosphate-binding protein YggS/PROSC family.

In terms of biological role, pyridoxal 5'-phosphate (PLP)-binding protein, which is involved in PLP homeostasis. This chain is Pyridoxal phosphate homeostasis protein, found in Mycobacterium leprae (strain TN).